A 360-amino-acid chain; its full sequence is MAGNSIGQLFKVTTFGESHGIALGCIVDGVPPNMALSEADIQPDLDRRKPGTSRYTTPRREDDEVQILSGVFEGKTTGTSIGLIIKNADQRSKDYGDIADKFRPGHADYTYQQKYGIRDYRGGGRSSARETAMRVAAGAIAKKYLREQFGIEVRGYLSQIGNVKINPETVADISKIDWQQVASNPFFCPDPVAVEGFGELIRELKKDGDSIGAKLTVVAENVPVGLGEPVFDRLDADLAHALMSINAVKAVEIGDGFDVVEQRGSEHRDEMTPQGFVSNHAGGILGGISSGQPIIAHIALKPTSSIMVPGRSVNLNNEQVELITKGRHDPCVGIRAVPIAEAMTAIILLDHLLRFKAQCR.

Arg-48 and Arg-54 together coordinate NADP(+). FMN contacts are provided by residues 125 to 127 (RSS), 246 to 247 (NA), Gly-286, 301 to 305 (KPTSS), and Arg-327.

This sequence belongs to the chorismate synthase family. As to quaternary structure, homotetramer. The cofactor is FMNH2.

It carries out the reaction 5-O-(1-carboxyvinyl)-3-phosphoshikimate = chorismate + phosphate. It functions in the pathway metabolic intermediate biosynthesis; chorismate biosynthesis; chorismate from D-erythrose 4-phosphate and phosphoenolpyruvate: step 7/7. In terms of biological role, catalyzes the anti-1,4-elimination of the C-3 phosphate and the C-6 proR hydrogen from 5-enolpyruvylshikimate-3-phosphate (EPSP) to yield chorismate, which is the branch point compound that serves as the starting substrate for the three terminal pathways of aromatic amino acid biosynthesis. This reaction introduces a second double bond into the aromatic ring system. This is Chorismate synthase from Actinobacillus pleuropneumoniae serotype 5b (strain L20).